The sequence spans 123 residues: Alpha-lactalbumin A (123 aa).

The C-type lysozyme domain occupies 1–123 (KQFTKCELSQ…KLEQWLCEEL (123 aa)). 4 disulfides stabilise this stretch: Cys6–Cys120, Cys28–Cys111, Cys61–Cys77, and Cys73–Cys91. Residues Lys79, Asp82, Asp84, Asp87, and Asp88 each contribute to the Ca(2+) site.

The protein belongs to the glycosyl hydrolase 22 family. As to quaternary structure, lactose synthase (LS) is a heterodimer of a catalytic component, beta1,4-galactosyltransferase (beta4Gal-T1) and a regulatory component, alpha-lactalbumin (LA). Mammary gland specific. Secreted in milk.

The protein resides in the secreted. Regulatory subunit of lactose synthase, changes the substrate specificity of galactosyltransferase in the mammary gland making glucose a good acceptor substrate for this enzyme. This enables LS to synthesize lactose, the major carbohydrate component of milk. In other tissues, galactosyltransferase transfers galactose onto the N-acetylglucosamine of the oligosaccharide chains in glycoproteins. In Equus caballus (Horse), this protein is Alpha-lactalbumin A.